We begin with the raw amino-acid sequence, 452 residues long: MLGVDEIIQTIKMIQEENLDIRTITMGVSLLDCAASDPVAVCDKVHRKVTRLAGRLVEIGNEIEREYGIPIVNKRIAVTPVALIIGEMGRDGCLALARTLDRAAAEVGVNFIGGYSTLVHKGFTRGDRELIASLPEALAATERVCASVNVATSKAGINMDAVRLMGAVIKETAARTADRSAIGCAKLVVFANAPEDNPFMAGAFHGVGEPECVINVGVSGPGVVKNAVARLPDADLGALAEEIKKTAFKITRMGELVGRETAKRLGVPFGIVDLSLAPTPAVGDSVAEIIEALGVEACGAPGTTAALALLNDAVKKGGAMASSRVGGLSGAFIPVSEDAGMIRAVAAGALGLDKLEAMTAVCSVGIDMVALPGDTSAETIAALIADEITIGVVNHKTTAVRLIPVPGKRAGEFVEFGGLLGRTPIMEVNHFGAAKFVHRGGRIPAPISSLNN.

Belongs to the UPF0210 family. Homodimer.

In Desulforudis audaxviator (strain MP104C), this protein is UPF0210 protein Daud_1353.